We begin with the raw amino-acid sequence, 154 residues long: Small ribosomal subunit protein uS11c (154 aa).

It belongs to the universal ribosomal protein uS11 family. Part of the 30S ribosomal subunit.

Its subcellular location is the plastid. This Helicosporidium sp. subsp. Simulium jonesii (Green alga) protein is Small ribosomal subunit protein uS11c.